Reading from the N-terminus, the 324-residue chain is 4-hydroxy-2-oxoglutarate aldolase, mitochondrial (324 aa).

Residues 1–22 constitute a mitochondrion transit peptide; the sequence is MFAHRSFSLLCRRSAVTSWRSQ. 74–75 is a substrate binding site; that stretch reads SN. Residue Lys-193 is the Schiff-base intermediate with substrate of the active site. Substrate-binding residues include Ser-195 and Gly-219.

The protein belongs to the DapA family. In terms of assembly, homotetramer.

Its subcellular location is the mitochondrion. It carries out the reaction (4S)-4-hydroxy-2-oxoglutarate = glyoxylate + pyruvate. It catalyses the reaction (4R)-4-hydroxy-2-oxoglutarate = glyoxylate + pyruvate. Inhibited by divalent cations. Catalyzes the final step in the metabolic pathway of hydroxyproline. This Danio rerio (Zebrafish) protein is 4-hydroxy-2-oxoglutarate aldolase, mitochondrial.